Consider the following 265-residue polypeptide: 1-(5-phosphoribosyl)-5-[(5-phosphoribosylamino)methylideneamino] imidazole-4-carboxamide isomerase (265 aa).

The active-site Proton acceptor is the D8. The Proton donor role is filled by D139.

The protein belongs to the HisA/HisF family.

Its subcellular location is the cytoplasm. It catalyses the reaction 1-(5-phospho-beta-D-ribosyl)-5-[(5-phospho-beta-D-ribosylamino)methylideneamino]imidazole-4-carboxamide = 5-[(5-phospho-1-deoxy-D-ribulos-1-ylimino)methylamino]-1-(5-phospho-beta-D-ribosyl)imidazole-4-carboxamide. It participates in amino-acid biosynthesis; L-histidine biosynthesis; L-histidine from 5-phospho-alpha-D-ribose 1-diphosphate: step 4/9. The protein is 1-(5-phosphoribosyl)-5-[(5-phosphoribosylamino)methylideneamino] imidazole-4-carboxamide isomerase of Herminiimonas arsenicoxydans.